The following is a 186-amino-acid chain: Trafficking protein particle complex subunit 3 (186 aa).

The protein belongs to the TRAPP small subunits family. BET3 subfamily. Homodimer. Part of the multisubunit TRAPP (transport protein particle) complex.

The protein localises to the golgi apparatus. It localises to the cis-Golgi network. It is found in the endoplasmic reticulum. In terms of biological role, may play a role in vesicular transport from endoplasmic reticulum to Golgi. The polypeptide is Trafficking protein particle complex subunit 3 (trappc3) (Dictyostelium discoideum (Social amoeba)).